The following is a 97-amino-acid chain: Osteocalcin (97 aa).

The N-terminal stretch at 1 to 18 is a signal peptide; sequence MKTLAILVLCSLAAICLT. Residues 19–52 constitute a propeptide that is removed on maturation; the sequence is SSASAGAQPAGDSPVQGGLFMEKDQASAVVRQTR. The region spanning 53–93 is the Gla domain; sequence AAKELTLAQTESLREVCETNMACDEMADAQGIVAAYQAFYG. Ca(2+)-binding residues include E63, E67, E70, and D76. 3 positions are modified to 4-carboxyglutamate: E63, E67, and E70. The cysteines at positions 69 and 75 are disulfide-linked. E77 is modified (4-carboxyglutamate).

The protein belongs to the osteocalcin/matrix Gla protein family. In terms of processing, gamma-carboxyglutamate residues are formed by vitamin K dependent carboxylation by GGCX. These residues are essential for the binding of calcium. In the branchial arches, BGP is found outside the chondrocyte-containing zone. It is found in some cells in the basal zone of the branchial filaments, near the branchial arches, and within the extracellular matrix in the medial zone. In the vertebra, BGP is found in the mineralized bone matrix.

It is found in the secreted. Functionally, the carboxylated form is one of the main organic components of the bone matrix, which constitutes 1-2% of the total bone protein. The carboxylated form binds strongly to apatite and calcium. The chain is Osteocalcin (bglap) from Argyrosomus regius (Meagre).